We begin with the raw amino-acid sequence, 218 residues long: Elongation factor Ts (218 aa).

Residues 82–85 form an involved in Mg(2+) ion dislocation from EF-Tu region; the sequence is TDFV.

The protein belongs to the EF-Ts family.

The protein localises to the cytoplasm. In terms of biological role, associates with the EF-Tu.GDP complex and induces the exchange of GDP to GTP. It remains bound to the aminoacyl-tRNA.EF-Tu.GTP complex up to the GTP hydrolysis stage on the ribosome. The protein is Elongation factor Ts (tsf) of Synechocystis sp. (strain ATCC 27184 / PCC 6803 / Kazusa).